The chain runs to 442 residues: uncharacterized protein (442 aa).

The tract at residues 211–269 (LDYSTDKPEDSESEDIELEDSESEDSESEDIDQHGGQGPDDDEFNANFDDPQFDEFDFG) is disordered. The segment covering 221 to 240 (SESEDIELEDSESEDSESED) has biased composition (acidic residues).

It localises to the virion. This is an uncharacterized protein from Acanthamoeba polyphaga (Amoeba).